A 313-amino-acid chain; its full sequence is tRNA-cytidine(32) 2-sulfurtransferase (313 aa).

Residues serine 46–serine 51 carry the PP-loop motif motif. Residues cysteine 121, cysteine 124, and cysteine 212 each coordinate [4Fe-4S] cluster.

It belongs to the TtcA family. In terms of assembly, homodimer. Requires Mg(2+) as cofactor. The cofactor is [4Fe-4S] cluster.

The protein localises to the cytoplasm. The catalysed reaction is cytidine(32) in tRNA + S-sulfanyl-L-cysteinyl-[cysteine desulfurase] + AH2 + ATP = 2-thiocytidine(32) in tRNA + L-cysteinyl-[cysteine desulfurase] + A + AMP + diphosphate + H(+). Its pathway is tRNA modification. Catalyzes the ATP-dependent 2-thiolation of cytidine in position 32 of tRNA, to form 2-thiocytidine (s(2)C32). The sulfur atoms are provided by the cysteine/cysteine desulfurase (IscS) system. The chain is tRNA-cytidine(32) 2-sulfurtransferase from Nitrosomonas eutropha (strain DSM 101675 / C91 / Nm57).